The sequence spans 657 residues: Broad substrate specificity ATP-binding cassette transporter ABCG2 (657 aa).

Residues 1–24 (MSSSNDHVLVPMSQRNNNGLPRTN) form a disordered region. At 1–393 (MSSSNDHVLV…SFKNLLGNPQ (393 aa)) the chain is on the cytoplasmic side. The span at 13-24 (SQRNNNGLPRTN) shows a compositional bias: polar residues. The ABC transporter domain maps to 48-285 (VKSGFLVRKT…FASAGYHCEP (238 aa)). Residues 79-86 (GPTGGGKS), 183-189 (RGISGGE), Glu210, and His242 contribute to the ATP site. The ABC transmembrane type-2 domain occupies 389 to 653 (LGNPQASVAQ…TIAYLKLLFL (265 aa)). Residues 394–414 (ASVAQLIVTVILGLIIGAIYF) traverse the membrane as a helical segment. Over 415 to 428 (DLKYDAAGMQNRAG) the chain is Extracellular. Residues 429–449 (VLFFLTTNQCFSSVSAVELFV) form a helical membrane-spanning segment. The Cytoplasmic segment spans residues 450–477 (VEKKLFIHEYISGYYRVSSYFFGKVMSD). The helical transmembrane segment at 478–498 (LLPMRFLPSVIFTCVLYFMLG) threads the bilayer. At 499–506 (LKKTVDAF) the chain is on the extracellular side. A helical transmembrane segment spans residues 507-527 (FIMMFTLIMVAYTASSMALAI). Residues 528–535 (ATGQSVVS) lie on the Cytoplasmic side of the membrane. A helical membrane pass occupies residues 536–556 (VATLLMTIAFVFMMLFSGLLV). The Extracellular segment spans residues 557-632 (NLRTIGPWLS…LSPWGLWKNH (76 aa)). A disulfide bridge connects residues Cys592 and Cys610. N-linked (GlcNAc...) asparagine glycans are attached at residues Asn596 and Asn600. Residues 633 to 653 (VALACMIIIFLTIAYLKLLFL) form a helical membrane-spanning segment. Residues 654–657 (KKYS) are Cytoplasmic-facing.

Belongs to the ABC transporter superfamily. ABCG family. Eye pigment precursor importer (TC 3.A.1.204) subfamily. As to quaternary structure, homodimer; disulfide-linked. The minimal functional unit is a homodimer, but the major oligomeric form in plasma membrane is a homotetramer with possibility of higher order oligomerization up to homododecamers. Post-translationally, N-glycosylated. Glycosylation-deficient ABCG2 is normally expressed and functional. In terms of processing, phosphorylated. Phosphorylation may regulate the localization to the plasma membrane, the homooligomerization and therefore, the activity of the transporter. As to expression, highly expressed in kidney. Lower expression in liver, colon, heart, spleen, and placenta. Expressed in mammary gland. Expressed in intestinal villi and renal proximal tubules, hepatic bile canalicular membranes, and placental labyrinth cells (at protein level).

It localises to the cell membrane. The protein localises to the apical cell membrane. It is found in the mitochondrion membrane. It carries out the reaction ATP + H2O + xenobioticSide 1 = ADP + phosphate + xenobioticSide 2.. The catalysed reaction is riboflavin(in) + ATP + H2O = riboflavin(out) + ADP + phosphate + H(+). It catalyses the reaction pheophorbide a(in) + ATP + H2O = pheophorbide a(out) + ADP + phosphate + H(+). The enzyme catalyses urate(in) + ATP + H2O = urate(out) + ADP + phosphate + H(+). It carries out the reaction indoxyl sulfate(in) + ATP + H2O = indoxyl sulfate(out) + ADP + phosphate + H(+). The catalysed reaction is sphing-4-enine 1-phosphate(in) + ATP + H2O = sphing-4-enine 1-phosphate(out) + ADP + phosphate + H(+). It catalyses the reaction estrone 3-sulfate(in) + ATP + H2O = estrone 3-sulfate(out) + ADP + phosphate + H(+). The enzyme catalyses dehydroepiandrosterone 3-sulfate(in) + ATP + H2O = dehydroepiandrosterone 3-sulfate(out) + ADP + phosphate + H(+). It carries out the reaction 4-methylumbelliferone sulfate(in) + ATP + H2O = 4-methylumbelliferone sulfate(out) + ADP + phosphate + H(+). The catalysed reaction is 5,7-dimethyl-2-methylamino-4-(3-pyridylmethyl)-1,3-benzothiazol-6-yl beta-D-glucuronate(in) + ATP + H2O = 5,7-dimethyl-2-methylamino-4-(3-pyridylmethyl)-1,3-benzothiazol-6-yl beta-D-glucuronate(out) + ADP + phosphate + H(+). It catalyses the reaction 4-methylumbelliferone beta-D-glucuronate(in) + ATP + H2O = 4-methylumbelliferone beta-D-glucuronate(out) + ADP + phosphate + H(+). The enzyme catalyses 5,7-dimethyl-2-methylamino-4-(3-pyridylmethyl)-1,3-benzothiazol-6-yl sulfate(in) + ATP + H2O = 5,7-dimethyl-2-methylamino-4-(3-pyridylmethyl)-1,3-benzothiazol-6-yl sulfate(out) + ADP + phosphate + H(+). It carries out the reaction 17beta-estradiol 17-O-(beta-D-glucuronate)(in) + ATP + H2O = 17beta-estradiol 17-O-(beta-D-glucuronate)(out) + ADP + phosphate + H(+). The catalysed reaction is methotrexate(in) + ATP + H2O = methotrexate(out) + ADP + phosphate + H(+). It catalyses the reaction itaconate(in) + ATP + H2O = itaconate(out) + ADP + phosphate + H(+). With respect to regulation, specifically inhibited by the fungal toxin fumitremorgin C and Ko143. Broad substrate specificity ATP-dependent transporter of the ATP-binding cassette (ABC) family that actively extrudes a wide variety of physiological compounds, dietary toxins and xenobiotics from cells. Involved in porphyrin homeostasis, mediating the export of protoporphyrin IX (PPIX) from both mitochondria to cytosol and cytosol to extracellular space, it also functions in the cellular export of heme. Also mediates the efflux of sphingosine-1-P from cells. Acts as a urate exporter functioning in both renal and extrarenal urate excretion. In kidney, it also functions as a physiological exporter of the uremic toxin indoxyl sulfate. Also involved in the excretion of steroids like estrone 3-sulfate/E1S, 3beta-sulfooxy-androst-5-en-17-one/DHEAS, and other sulfate conjugates. Mediates the secretion of the riboflavin and biotin vitamins into milk. Extrudes pheophorbide a, a phototoxic porphyrin catabolite of chlorophyll, reducing its bioavailability. Plays an important role in the exclusion of xenobiotics from the brain. It confers to cells a resistance to multiple drugs and other xenobiotics including mitoxantrone, pheophorbide, camptothecin, methotrexate, azidothymidine, and the anthracyclines daunorubicin and doxorubicin, through the control of their efflux. In placenta, it limits the penetration of drugs from the maternal plasma into the fetus. May play a role in early stem cell self-renewal by blocking differentiation. In inflammatory macrophages, exports itaconate from the cytosol to the extracellular compartment and limits the activation of TFEB-dependent lysosome biogenesis involved in antibacterial innate immune response. In Mus musculus (Mouse), this protein is Broad substrate specificity ATP-binding cassette transporter ABCG2 (Abcg2).